We begin with the raw amino-acid sequence, 310 residues long: Cysteine synthase (310 aa).

Lys-46 carries the post-translational modification N6-(pyridoxal phosphate)lysine. Residues Asn-76, 180–184, and Ser-268 contribute to the pyridoxal 5'-phosphate site; that span reads GTGGT.

It belongs to the cysteine synthase/cystathionine beta-synthase family. Homodimer. Pyridoxal 5'-phosphate is required as a cofactor.

The catalysed reaction is O-acetyl-L-serine + hydrogen sulfide = L-cysteine + acetate. Its pathway is amino-acid biosynthesis; L-cysteine biosynthesis; L-cysteine from L-serine: step 2/2. This is Cysteine synthase (cysK) from Staphylococcus aureus (strain Mu50 / ATCC 700699).